A 127-amino-acid chain; its full sequence is uncharacterized protein (127 aa).

The signal sequence occupies residues 1-16; it reads MIKKIIFGIAILLSLS. Cys-17 carries N-palmitoyl cysteine lipidation. Cys-17 carries the S-diacylglycerol cysteine lipid modification. Residues 56–101 are a coiled coil; that stretch reads EVRKEIQEYRVEIVDINKKKRELYNSLSKEAQNFLAEQQKYKQKLS. The segment at 101 to 127 is disordered; it reads SISKLPTEDDSPNNTANSKDNKDTDTK.

The protein localises to the cell membrane. This is an uncharacterized protein from Rickettsia felis (strain ATCC VR-1525 / URRWXCal2) (Rickettsia azadi).